Reading from the N-terminus, the 359-residue chain is Adenosine 3'-phospho 5'-phosphosulfate transporter 1 (359 aa).

The next 7 membrane-spanning stretches (helical) occupy residues 26–46 (NMKL…YGIL), 68–88 (STFL…VIVL), 157–177 (YSIA…GKIS), 184–204 (TSYG…TSTF), 228–248 (SIIS…IEFI), 254–276 (VFFD…YYTI), and 300–320 (TLIY…LVFG). The tract at residues 332–359 (KKHGGHSHGGSNAATTTTPSNNSNNTEK) is disordered. A compositionally biased stretch (low complexity) spans 340-359 (GGSNAATTTTPSNNSNNTEK).

Belongs to the nucleotide-sugar transporter family. SLC35B subfamily.

The protein localises to the golgi apparatus membrane. The enzyme catalyses 3'-phosphoadenylyl sulfate(in) + adenosine 3',5'-bisphosphate(out) = 3'-phosphoadenylyl sulfate(out) + adenosine 3',5'-bisphosphate(in). Probably functions as a 3'-phosphoadenylyl sulfate:adenosine 3',5'-bisphosphate antiporter at the Golgi membranes. Mediates the transport from the cytosol into the lumen of the Golgi of 3'-phosphoadenylyl sulfate/adenosine 3'-phospho 5'-phosphosulfate (PAPS), a universal sulfuryl donor for sulfation events that take place in that compartment. This Dictyostelium discoideum (Social amoeba) protein is Adenosine 3'-phospho 5'-phosphosulfate transporter 1 (slc35b2).